The chain runs to 122 residues: Large ribosomal subunit protein uL14 (122 aa).

The protein belongs to the universal ribosomal protein uL14 family. In terms of assembly, part of the 50S ribosomal subunit. Forms a cluster with proteins L3 and L19. In the 70S ribosome, L14 and L19 interact and together make contacts with the 16S rRNA in bridges B5 and B8.

Binds to 23S rRNA. Forms part of two intersubunit bridges in the 70S ribosome. In Pelobacter propionicus (strain DSM 2379 / NBRC 103807 / OttBd1), this protein is Large ribosomal subunit protein uL14.